A 264-amino-acid polypeptide reads, in one-letter code: Thymidylate synthase (264 aa).

Residue R21 coordinates dUMP. H51 serves as a coordination point for (6R)-5,10-methylene-5,6,7,8-tetrahydrofolate. 126–127 provides a ligand contact to dUMP; it reads RR. Residue C146 is the Nucleophile of the active site. DUMP-binding positions include 166-169, N177, and 207-209; these read RSCD and HLY. D169 serves as a coordination point for (6R)-5,10-methylene-5,6,7,8-tetrahydrofolate. (6R)-5,10-methylene-5,6,7,8-tetrahydrofolate is bound at residue A263.

It belongs to the thymidylate synthase family. Bacterial-type ThyA subfamily. As to quaternary structure, homodimer.

The protein resides in the cytoplasm. The enzyme catalyses dUMP + (6R)-5,10-methylene-5,6,7,8-tetrahydrofolate = 7,8-dihydrofolate + dTMP. It participates in pyrimidine metabolism; dTTP biosynthesis. Catalyzes the reductive methylation of 2'-deoxyuridine-5'-monophosphate (dUMP) to 2'-deoxythymidine-5'-monophosphate (dTMP) while utilizing 5,10-methylenetetrahydrofolate (mTHF) as the methyl donor and reductant in the reaction, yielding dihydrofolate (DHF) as a by-product. This enzymatic reaction provides an intracellular de novo source of dTMP, an essential precursor for DNA biosynthesis. The protein is Thymidylate synthase of Edwardsiella ictaluri (strain 93-146).